A 1176-amino-acid polypeptide reads, in one-letter code: Growth-differentiation transition protein 5 (1176 aa).

The N-terminal stretch at 1 to 25 (MKNNFFKKTIILLIFLSIFILYSNA) is a signal peptide. Topologically, residues 26-913 (DEETITTPPG…DVPANENTLN (888 aa)) are extracellular. The chain crosses the membrane as a helical span at residues 914 to 934 (LLTIVLPICSAVVVASSVMLG). The Cytoplasmic portion of the chain corresponds to 935-1176 (RLFYKKKFKK…NVGYNVHEYF (242 aa)). 2 stretches are compositionally biased toward low complexity: residues 965 to 974 (SNIENKSESI) and 1053 to 1066 (PQIS…SIPS). Disordered regions lie at residues 965-985 (SNIE…EQKE) and 1050-1080 (VDTP…PPST). The span at 1067-1078 (SSPPPPPLPLPP) shows a compositional bias: pro residues.

This sequence belongs to the GDT family.

It is found in the membrane. The sequence is that of Growth-differentiation transition protein 5 (gdt5) from Dictyostelium discoideum (Social amoeba).